Consider the following 228-residue polypeptide: Aquaporin Z (228 aa).

2 consecutive transmembrane segments (helical) span residues 1-21 (MLNK…GGCG) and 23-43 (AILA…ALAF). Residues 63-65 (NPA) carry the NPA 1 motif. 3 helical membrane-spanning segments follow: residues 82 to 102 (IPYW…LYVI), 129 to 149 (MMAG…IILG), and 154 to 174 (LAPA…IHLV). The short motif at 184 to 186 (NPA) is the NPA 2 element. The chain crosses the membrane as a helical span at residues 205–225 (LFWVAPLVGAVIGAIIWKGLL).

This sequence belongs to the MIP/aquaporin (TC 1.A.8) family. In terms of assembly, homotetramer.

Its subcellular location is the cell inner membrane. It catalyses the reaction H2O(in) = H2O(out). In terms of biological role, channel that permits osmotically driven movement of water in both directions. It is involved in the osmoregulation and in the maintenance of cell turgor during volume expansion in rapidly growing cells. It mediates rapid entry or exit of water in response to abrupt changes in osmolarity. This is Aquaporin Z from Brucella abortus biovar 1 (strain 9-941).